Here is a 118-residue protein sequence, read N- to C-terminus: Large ribosomal subunit protein uL22c (118 aa).

The protein belongs to the universal ribosomal protein uL22 family. As to quaternary structure, part of the 50S ribosomal subunit.

Its subcellular location is the plastid. It localises to the organellar chromatophore. In terms of biological role, this protein binds specifically to 23S rRNA. The globular domain of the protein is located near the polypeptide exit tunnel on the outside of the subunit, while an extended beta-hairpin is found that lines the wall of the exit tunnel in the center of the 70S ribosome. In Paulinella chromatophora, this protein is Large ribosomal subunit protein uL22c (rpl22).